The primary structure comprises 78 residues: Conotoxin TsMEKL-P012 (78 aa).

The N-terminal stretch at M1–A19 is a signal peptide. Residues L20–S38 constitute a propeptide that is removed on maturation. Cystine bridges form between C52/C66, C59/C70, and C65/C75.

It belongs to the conotoxin O2 superfamily. As to expression, expressed by the venom duct.

The protein resides in the secreted. This is Conotoxin TsMEKL-P012 from Conus tessulatus (Tessellate cone).